The following is a 212-amino-acid chain: MKQLFRQWYDLSEIKKELTTRNWFPATSGNISIKVSHEPLTFLITASGKDKTKTTPDDFLLVDHLGVPVLETELRPSAETILHTHIYNNTNAGCVLHVHTTDNNVITNLYSDAVTLQNQEIIKALDIWEEGATIHIPIIENHAHIPTLGENFRKHIQGDSGAVLIRNHGITVWGRDSFDAKKRLEAYEFLFQFHIKLLSIQGGVSNGANSYS.

Residues His97 and His99 each contribute to the Zn(2+) site.

This sequence belongs to the aldolase class II family. MtnB subfamily. In terms of assembly, homotetramer. The cofactor is Zn(2+).

The enzyme catalyses 5-(methylsulfanyl)-D-ribulose 1-phosphate = 5-methylsulfanyl-2,3-dioxopentyl phosphate + H2O. The protein operates within amino-acid biosynthesis; L-methionine biosynthesis via salvage pathway; L-methionine from S-methyl-5-thio-alpha-D-ribose 1-phosphate: step 2/6. Its function is as follows. Catalyzes the dehydration of methylthioribulose-1-phosphate (MTRu-1-P) into 2,3-diketo-5-methylthiopentyl-1-phosphate (DK-MTP-1-P). The protein is Methylthioribulose-1-phosphate dehydratase of Bacillus thuringiensis (strain Al Hakam).